A 428-amino-acid polypeptide reads, in one-letter code: PGL/p-HBAD biosynthesis glycosyltransferase MRA_2985 (428 aa).

The tract at residues 1-23 is disordered; that stretch reads MEETSVAGDPGPDAGTSTAPNAA.

Belongs to the UDP-glycosyltransferase family.

Involved in glycosylation steps downstream of mono-O-methyl-glycosyl-p-hydroxybenzoic acid derivative (p-HBAD I) and 2-O-methyl-rhamnosyl-phenolphthiocerol dimycocerosate (mycoside B) during the p-hydroxybenzoic acid derivatives (p-HBAD) and glycosylated phenolphthiocerol dimycocerosates (PGL) biosynthesis. The chain is PGL/p-HBAD biosynthesis glycosyltransferase MRA_2985 from Mycobacterium tuberculosis (strain ATCC 25177 / H37Ra).